We begin with the raw amino-acid sequence, 427 residues long: Glutamate-1-semialdehyde 2,1-aminomutase (427 aa).

N6-(pyridoxal phosphate)lysine is present on Lys265.

It belongs to the class-III pyridoxal-phosphate-dependent aminotransferase family. HemL subfamily. Homodimer. The cofactor is pyridoxal 5'-phosphate.

It localises to the cytoplasm. It catalyses the reaction (S)-4-amino-5-oxopentanoate = 5-aminolevulinate. Its pathway is porphyrin-containing compound metabolism; protoporphyrin-IX biosynthesis; 5-aminolevulinate from L-glutamyl-tRNA(Glu): step 2/2. This Pseudomonas aeruginosa (strain LESB58) protein is Glutamate-1-semialdehyde 2,1-aminomutase.